A 133-amino-acid polypeptide reads, in one-letter code: Nickel-responsive regulator (133 aa).

Residues His76, His87, His89, and Cys95 each coordinate Ni(2+).

This sequence belongs to the transcriptional regulatory CopG/NikR family. In terms of assembly, homotetramer. Ni(2+) is required as a cofactor.

Functionally, transcriptional repressor of the nikABCDE operon. Is active in the presence of excessive concentrations of intracellular nickel. This chain is Nickel-responsive regulator, found in Salmonella arizonae (strain ATCC BAA-731 / CDC346-86 / RSK2980).